Reading from the N-terminus, the 770-residue chain is MTYTINADQVHQIVHNLHHDPFEVLGCHPLGDHGKVNQWVIRAYLPTAEAVTVLLPTDRREVIMTTVHHPNFFECVLELEEPKNYQLRITENGHERVIYDPYGFKTPKLTDFDLHVFGEGNHHRIYEKLGAHLMTVDGVKGVYFAVWAPNARNVSILGDFNNWDGRLHQMRKRNNMVWELFIPELGVGTSYKYEIKNWEGHIYEKTDPYGFYQEVRPKTASIVADLDGYQWHDEDWLEARRTSDPLSKPVSVYELHLGSWLHTAYDEPVKTLHGEGVPVEVSEWNTGARFLTYYELVDKLIPYVKELGYTHIELLPIAEHPFDGSWGYQVTGYYAPTSRFGSPEDFMYFVDQCHLNGIGVIIDWVPGHFPKDGHGLAFFDGTHLYEHGDPRKGEHKEWGTLIFNYGRNEVRNFLVANALFWFDKYHIDGMRVDAVASMLYLDYCREEGEWVANEYGGRENLEAADFLRQVNSVVYSYFPGILSIAEESTSWPMVSWPTYVGGLGFNLKWNMGWMHDMLDYFSMDPWFRQFHQNSITFSMWYNHSENYMLALSHDEVVHGKSNMLGKMPGDEWQKYANVRALFTYMFTHPGKKTMFMSMEFGQWSEWNVWGDLEWHLLNFPPHQQLKQFFTELNHLYKNEPALYSNDFDESGFQWIDCSDNRHSVVSFIRRAKNSAEFVVTICNFTPQPHSHYRVGVPVPGFYTELFNSDARQYGGSNMGNLGGKWTEEWSFHEQPYSLDLCLPPLSVLVLKLSQNAEENTVPAEEASNIA.

Asp433 serves as the catalytic Nucleophile. Residue Glu486 is the Proton donor of the active site.

This sequence belongs to the glycosyl hydrolase 13 family. GlgB subfamily. In terms of assembly, monomer.

It catalyses the reaction Transfers a segment of a (1-&gt;4)-alpha-D-glucan chain to a primary hydroxy group in a similar glucan chain.. It participates in glycan biosynthesis; glycogen biosynthesis. In terms of biological role, catalyzes the formation of the alpha-1,6-glucosidic linkages in glycogen by scission of a 1,4-alpha-linked oligosaccharide from growing alpha-1,4-glucan chains and the subsequent attachment of the oligosaccharide to the alpha-1,6 position. This Synechocystis sp. (strain ATCC 27184 / PCC 6803 / Kazusa) protein is 1,4-alpha-glucan branching enzyme GlgB (glgB).